Here is a 475-residue protein sequence, read N- to C-terminus: Zinc finger protein 296 (475 aa).

The tract at residues 1-78 is disordered; sequence MSRRKAGSAP…SPGPMPAGAA (78 aa). Residue K35 forms a Glycyl lysine isopeptide (Lys-Gly) (interchain with G-Cter in SUMO2) linkage. 3 consecutive C2H2-type zinc fingers follow at residues 157–180, 231–253, and 259–281; these read LSCL…QWDH, PTCP…MRSH, and YACD…KKTH. The tract at residues 275–385 is disordered; sequence NRHKKTHRQV…KSGGKSRGPG (111 aa). 2 stretches are compositionally biased toward low complexity: residues 295 to 313 and 326 to 338; these read SQEQ…AAAP and GAAA…EPGA. The segment covering 339 to 351 has biased composition (gly residues); sequence PGSGAQAGPGGDT. The segment covering 354–367 has biased composition (polar residues); that stretch reads AITTEQRTDPANSQ. 3 consecutive C2H2-type zinc fingers follow at residues 386-408, 414-436, and 445-468; these read GSCE…RRSH, YTCE…RRMH, and FECP…RQKH.

Belongs to the krueppel C2H2-type zinc-finger protein family. In terms of assembly, interacts with KLF4.

Its subcellular location is the nucleus. Its function is as follows. May be a transcriptional corepressor with KLF4. This is Zinc finger protein 296 (ZNF296) from Homo sapiens (Human).